A 510-amino-acid chain; its full sequence is Chromosomal replication initiator protein DnaA (510 aa).

Residues 1–107 (MTNDPGSGFA…VRIAPPPADD (107 aa)) form a domain I, interacts with DnaA modulators region. Positions 107-169 (DDDDSVAAAV…ADTSASADGT (63 aa)) are domain II. Residues 119–168 (PGLEASPETSQEVSDEIDDFGENAPKSRQSWPTHFKKRSTDADTSASADG) are disordered. The interval 170-386 (SLNRRYTFDT…GALIRVTAFA (217 aa)) is domain III, AAA+ region. ATP-binding residues include Gly214, Gly216, Lys217, and Thr218. The domain IV, binds dsDNA stretch occupies residues 387–510 (SLNKTPIDKA…TTRIRQRSKR (124 aa)).

Belongs to the DnaA family. As to quaternary structure, oligomerizes as a right-handed, spiral filament on DNA at oriC.

The protein resides in the cytoplasm. Plays an essential role in the initiation and regulation of chromosomal replication. ATP-DnaA binds to the origin of replication (oriC) to initiate formation of the DNA replication initiation complex once per cell cycle. Binds the DnaA box (a 9 base pair repeat at the origin) and separates the double-stranded (ds)DNA. Forms a right-handed helical filament on oriC DNA; dsDNA binds to the exterior of the filament while single-stranded (ss)DNA is stabiized in the filament's interior. The ATP-DnaA-oriC complex binds and stabilizes one strand of the AT-rich DNA unwinding element (DUE), permitting loading of DNA polymerase. After initiation quickly degrades to an ADP-DnaA complex that is not apt for DNA replication. Binds acidic phospholipids. This is Chromosomal replication initiator protein DnaA from Mycobacterium ulcerans (strain Agy99).